The primary structure comprises 281 residues: Endochitinase B (281 aa).

A signal peptide spans 1–33 (MAMAKAGAPRVSAAQLVTLGLSLLCAVAGPAAA). The Chitin-binding type-1 domain maps to 34–68 (QNCGCQPNVCCSKFGYCGTTDEYCGDGCQSGPCRS). Cystine bridges form between C36-C44, C38-C50, C43-C57, and C61-C66. The tract at residues 69-78 (GGGGSSGGGG) is hinge region (Gly-rich). Residues 79 to 281 (ANVASVVTGS…GVDPGPNLTC (203 aa)) are catalytic. The cysteines at positions 101 and 150 are disulfide-linked. E145 (proton donor) is an active-site residue. An N-linked (GlcNAc...) asparagine glycan is attached at N156. Intrachain disulfides connect C162–C171 and C249–C281. N278 carries N-linked (GlcNAc...) asparagine glycosylation.

Belongs to the glycosyl hydrolase 19 family. Chitinase class I subfamily.

The protein localises to the secreted. It catalyses the reaction Random endo-hydrolysis of N-acetyl-beta-D-glucosaminide (1-&gt;4)-beta-linkages in chitin and chitodextrins.. Its function is as follows. Defense against chitin-containing fungal pathogens. Its action is countered by fungal polyglycine hydrolases, that cleaves within its hinge region (Gly-rich) to disrupt chitin-binding. The polypeptide is Endochitinase B (Zea mays (Maize)).